Consider the following 175-residue polypeptide: Cyclic pyranopterin monophosphate synthase (175 aa).

Substrate-binding positions include 78–80 (LCH) and 125–126 (ME). The active site involves Asp140.

This sequence belongs to the MoaC family. As to quaternary structure, homohexamer; trimer of dimers.

It catalyses the reaction (8S)-3',8-cyclo-7,8-dihydroguanosine 5'-triphosphate = cyclic pyranopterin phosphate + diphosphate. The protein operates within cofactor biosynthesis; molybdopterin biosynthesis. Functionally, catalyzes the conversion of (8S)-3',8-cyclo-7,8-dihydroguanosine 5'-triphosphate to cyclic pyranopterin monophosphate (cPMP). This is Cyclic pyranopterin monophosphate synthase from Rhodopirellula baltica (strain DSM 10527 / NCIMB 13988 / SH1).